A 214-amino-acid polypeptide reads, in one-letter code: Methyltransferase HEMK2 (214 aa).

Positions 29, 51, 53, 77, 103, 104, and 122 each coordinate S-adenosyl-L-methionine. Asn-122 contacts a protein.

Belongs to the eukaryotic/archaeal PrmC-related family. In terms of assembly, heterodimer; heterodimerization with TRMT112 is required for S-adenosyl-L-methionine-binding. Ubiquitinated, leading to its degradation by the proteasome. Highly expressed in undifferentiated embryonic stem cells (at protein level). Also expressed in testis and brain, weakly expressed in differentiated embryonic stem cells and kidney. Not expressed in muscle, heart, placenta, pancreas, lung and stomach.

The protein resides in the nucleus. It carries out the reaction L-lysyl-[histone] + S-adenosyl-L-methionine = N(6)-methyl-L-lysyl-[histone] + S-adenosyl-L-homocysteine + H(+). It catalyses the reaction L-glutaminyl-[protein] + S-adenosyl-L-methionine = N(5)-methyl-L-glutaminyl-[protein] + S-adenosyl-L-homocysteine + H(+). The catalysed reaction is methylarsonous acid + S-adenosyl-L-methionine = dimethylarsinate + S-adenosyl-L-homocysteine + 2 H(+). Methyltransferase that can methylate proteins and, to a lower extent, arsenic. Catalytic subunit of a heterodimer with TRMT112, which monomethylates 'Lys-12' of histone H4 (H4K12me1), a modification present at the promoters of numerous genes encoding cell cycle regulators. Catalytic subunit of a heterodimer with TRMT112, which catalyzes N5-methylation of Glu residue of proteins with a Gly-Gln-Xaa-Xaa-Xaa-Arg motif. Methylates ETF1 on 'Gln-185'; ETF1 needs to be complexed to ERF3 in its GTP-bound form to be efficiently methylated. May also play a role in the modulation of arsenic-induced toxicity by mediating the conversion of monomethylarsonous acid (3+) into the less toxic dimethylarsonic acid. It however only plays a limited role in arsenic metabolism compared with AS3MT. The polypeptide is Methyltransferase HEMK2 (Mus musculus (Mouse)).